Consider the following 287-residue polypeptide: Intermediate filament family orphan 2 (287 aa).

Residues 1–254 form the IF rod domain; sequence MNLQTMVDTL…RLIKGSADRN (254 aa). The tract at residues 248–287 is disordered; sequence KGSADRNSPSPSSVASSDSGSTDEIQDDLEREADVEPMVS. Low complexity predominate over residues 255 to 267; sequence SPSPSSVASSDSG. A compositionally biased stretch (acidic residues) spans 271 to 287; that stretch reads EIQDDLEREADVEPMVS.

It belongs to the intermediate filament family.

The sequence is that of Intermediate filament family orphan 2 (Iffo2) from Rattus norvegicus (Rat).